The primary structure comprises 179 residues: RNA pyrophosphohydrolase (179 aa).

The region spanning 6–149 (GYRANVGIVI…KKPIYEDMLK (144 aa)) is the Nudix hydrolase domain. The Nudix box motif lies at 38–59 (GGIDFGESELDALFRELNEEIG).

The protein belongs to the Nudix hydrolase family. RppH subfamily. Requires a divalent metal cation as cofactor.

Its function is as follows. Accelerates the degradation of transcripts by removing pyrophosphate from the 5'-end of triphosphorylated RNA, leading to a more labile monophosphorylated state that can stimulate subsequent ribonuclease cleavage. This is RNA pyrophosphohydrolase from Ruthia magnifica subsp. Calyptogena magnifica.